The sequence spans 45 residues: Large ribosomal subunit protein bL34 (45 aa).

The protein belongs to the bacterial ribosomal protein bL34 family.

This is Large ribosomal subunit protein bL34 from Paenarthrobacter aurescens (strain TC1).